The sequence spans 206 residues: Large ribosomal subunit protein uL4 (206 aa).

The disordered stretch occupies residues 45 to 75 (RQGTHSTKTRGEVRGGGRKPWRQKGTGRARQ). The segment covering 60–71 (GGRKPWRQKGTG) has biased composition (basic residues).

The protein belongs to the universal ribosomal protein uL4 family. Part of the 50S ribosomal subunit.

Functionally, one of the primary rRNA binding proteins, this protein initially binds near the 5'-end of the 23S rRNA. It is important during the early stages of 50S assembly. It makes multiple contacts with different domains of the 23S rRNA in the assembled 50S subunit and ribosome. Forms part of the polypeptide exit tunnel. The chain is Large ribosomal subunit protein uL4 from Thermoanaerobacter pseudethanolicus (strain ATCC 33223 / 39E) (Clostridium thermohydrosulfuricum).